Reading from the N-terminus, the 384-residue chain is Glucans biosynthesis protein C (384 aa).

Helical transmembrane passes span Ala17–Trp37, Phe54–Leu74, Val91–Gln111, Leu140–Phe160, Ala173–Ile193, Phe212–Ile232, Phe240–Leu260, Thr274–Gly294, Ala311–Thr331, and Leu338–Ile358.

The protein belongs to the acyltransferase 3 family. OpgC subfamily.

The protein resides in the cell membrane. The protein operates within glycan metabolism; osmoregulated periplasmic glucan (OPG) biosynthesis. In terms of biological role, necessary for the succinyl substitution of periplasmic glucans. Could catalyze the transfer of succinyl residues from the cytoplasmic side of the membrane to the nascent glucan backbones on the periplasmic side of the membrane. This Salmonella choleraesuis (strain SC-B67) protein is Glucans biosynthesis protein C.